Consider the following 115-residue polypeptide: NAD(P)H-quinone oxidoreductase subunit M (115 aa).

Belongs to the complex I NdhM subunit family. As to quaternary structure, NDH-1 can be composed of about 15 different subunits; different subcomplexes with different compositions have been identified which probably have different functions.

It is found in the cellular thylakoid membrane. It catalyses the reaction a plastoquinone + NADH + (n+1) H(+)(in) = a plastoquinol + NAD(+) + n H(+)(out). The catalysed reaction is a plastoquinone + NADPH + (n+1) H(+)(in) = a plastoquinol + NADP(+) + n H(+)(out). Functionally, NDH-1 shuttles electrons from an unknown electron donor, via FMN and iron-sulfur (Fe-S) centers, to quinones in the respiratory and/or the photosynthetic chain. The immediate electron acceptor for the enzyme in this species is believed to be plastoquinone. Couples the redox reaction to proton translocation, and thus conserves the redox energy in a proton gradient. Cyanobacterial NDH-1 also plays a role in inorganic carbon-concentration. The sequence is that of NAD(P)H-quinone oxidoreductase subunit M from Prochlorococcus marinus subsp. pastoris (strain CCMP1986 / NIES-2087 / MED4).